The sequence spans 536 residues: MAKIIKFNEEARKKLENGVDVLSNTVKVTLGPKGRNVVIEKSYGSPLITNDGVTIAKEIELEDPFENMGAQLIKEVATKANDVAGDGTTTATVLAQAMVKEGLKMITAGSNPVFVKRGIEKATKKAVSILETKSKKIAGNSEIAQVASISAGDEEIGNLIAKAMEKVGENGVITVEEAKSLETTLEVVEGMQFDKGYISSYLVTDPERMTAELDDPYILITDKKISNMKEILPVLEATARSSRPLLIIAEDIEGDVLTTLVVNKLRGTLNVVGVKAPYFGDKRIGALEDIAILTSSQVISKDKGMELEKVDISSLGSAKKVKVTKDNTLIIGGIGKEKDITSRISQIKTQISSTTSEYEKDSLKERLAKLSGGVAVIKVGSATETELKEKKLRIEDALNATKAAIEEGIVSGGGTVLIEILKEMESFELSGEERIGVNIVKKALTAPLKQIAENAGLEGSIVVEKVKNAESGIGFDAAKEEYVDMIKSGIIDPAKVTRSALQNSASVAALVLTTEAIIVDKPKKEESDTPNMPMMM.

ATP-binding positions include 29 to 32, 86 to 90, Gly413, 476 to 478, and Asp492; these read TLGP, DGTTT, and DAA.

The protein belongs to the chaperonin (HSP60) family. In terms of assembly, forms a cylinder of 14 subunits composed of two heptameric rings stacked back-to-back. Interacts with the co-chaperonin GroES.

The protein localises to the cytoplasm. It catalyses the reaction ATP + H2O + a folded polypeptide = ADP + phosphate + an unfolded polypeptide.. Its function is as follows. Together with its co-chaperonin GroES, plays an essential role in assisting protein folding. The GroEL-GroES system forms a nano-cage that allows encapsulation of the non-native substrate proteins and provides a physical environment optimized to promote and accelerate protein folding. In Methanococcus vannielii (strain ATCC 35089 / DSM 1224 / JCM 13029 / OCM 148 / SB), this protein is Chaperonin GroEL.